Here is a 771-residue protein sequence, read N- to C-terminus: UPF0313 protein PSPTO_4928 (771 aa).

Residues 371–649 (AYDMIRFSVN…KAFLRYHDPK (279 aa)) enclose the Radical SAM core domain. [4Fe-4S] cluster-binding residues include cysteine 385, cysteine 389, and cysteine 392. The interval 683-771 (DTYQSARRKN…KPARKPVVPR (89 aa)) is disordered. Composition is skewed to basic and acidic residues over residues 726 to 735 (KPWDKREEAK) and 745 to 754 (AAKERMDAAK). The span at 756–765 (GKGKGGKPAR) shows a compositional bias: basic residues.

Belongs to the UPF0313 family. Requires [4Fe-4S] cluster as cofactor.

This is UPF0313 protein PSPTO_4928 from Pseudomonas syringae pv. tomato (strain ATCC BAA-871 / DC3000).